The sequence spans 1008 residues: SKI family transcriptional corepressor 2 (1008 aa).

Disordered regions lie at residues 280 to 315 and 514 to 927; these read HLLGAPPPPPPPPPLAELAGAPHAHHKRPRFDDDDD and EPGG…KKDV. Pro residues-rich tracts occupy residues 284–294 and 525–534; these read APPPPPPPPPL and APPPGQPPPV. Low complexity-rich tracts occupy residues 535-544 and 578-595; these read VANGPGSGPP and GVTSGTGSASSGAGSVGT. The segment covering 626-635 has biased composition (basic and acidic residues); it reads GGKDDAESLA. Over residues 649-666 the composition is skewed to basic residues; it reads PAHHHHHHHHPHHHHHHP. The segment covering 691 to 703 has biased composition (pro residues); the sequence is APPPPPPPPPLAP. Acidic residues-rich tracts occupy residues 724 to 739 and 748 to 766; these read DSSEDEEDEEEEQEVD and GEEEEDGRDPEDEEEEDEE. Positions 787–797 are enriched in basic and acidic residues; it reads LSEKGSGRDRT. A compositionally biased stretch (low complexity) spans 842-855; that stretch reads SSSGGSRPGSPVHH. Basic and acidic residues-rich tracts occupy residues 856-872, 880-890, and 905-915; these read PSLEEEPSYKDNQKPKE, TKDDNFSDKNK, and FWRERSGEHTQ.

This sequence belongs to the SKI family. Interacts with SMAD2 and SMAD3. As to expression, expression is restricted to adult and embryonic central nervous system. Expressed at high levels in the developing cerebellum, ventral metencephalon and myelencephalon at 12.5 dpc (at protein level). In the adult cerebellum, expressed specifically in Purkinje cells.

The protein resides in the nucleus. Its subcellular location is the cytoplasm. Its function is as follows. Acts as a TGF-beta antagonist in the nervous system. Exhibits transcriptional repressor activity. The sequence is that of SKI family transcriptional corepressor 2 from Mus musculus (Mouse).